Here is a 469-residue protein sequence, read N- to C-terminus: 1-aminocyclopropane-1-carboxylate synthase 8 (469 aa).

Residues Glu47 and Tyr85 each contribute to the substrate site. Lys272 is modified (N6-(pyridoxal phosphate)lysine).

Belongs to the class-I pyridoxal-phosphate-dependent aminotransferase family. Homodimer and heterodimer. In vivo, the relevance of heterodimerization with other ACS enzymes is however unsure. Interacts with GRF3. The cofactor is pyridoxal 5'-phosphate. May be processed at its C-terminus. As to expression, expressed in roots. Expressed at low level in flowers and siliques.

It carries out the reaction S-adenosyl-L-methionine = 1-aminocyclopropane-1-carboxylate + S-methyl-5'-thioadenosine + H(+). It functions in the pathway alkene biosynthesis; ethylene biosynthesis via S-adenosyl-L-methionine; ethylene from S-adenosyl-L-methionine: step 1/2. Its function is as follows. 1-aminocyclopropane-1-carboxylate synthase (ACS) enzymes catalyze the conversion of S-adenosyl-L-methionine (SAM) into 1-aminocyclopropane-1-carboxylate (ACC), a direct precursor of ethylene. This Arabidopsis thaliana (Mouse-ear cress) protein is 1-aminocyclopropane-1-carboxylate synthase 8 (ACS8).